We begin with the raw amino-acid sequence, 129 residues long: Glycine cleavage system H protein (129 aa).

Positions T24 to K106 constitute a Lipoyl-binding domain. K65 is subject to N6-lipoyllysine.

The protein belongs to the GcvH family. The glycine cleavage system is composed of four proteins: P, T, L and H. The cofactor is (R)-lipoate.

Its function is as follows. The glycine cleavage system catalyzes the degradation of glycine. The H protein shuttles the methylamine group of glycine from the P protein to the T protein. The chain is Glycine cleavage system H protein from Escherichia coli O7:K1 (strain IAI39 / ExPEC).